The chain runs to 145 residues: Small ribosomal subunit protein uS19 (145 aa).

It belongs to the universal ribosomal protein uS19 family. Component of the small ribosomal subunit.

It localises to the cytoplasm. Component of the small ribosomal subunit. The ribosome is a large ribonucleoprotein complex responsible for the synthesis of proteins in the cell. This chain is Small ribosomal subunit protein uS19 (rps15), found in Xenopus laevis (African clawed frog).